The following is a 148-amino-acid chain: UPF0260 protein YcgN (148 aa).

This sequence belongs to the UPF0260 family.

The sequence is that of UPF0260 protein YcgN from Salmonella paratyphi A (strain AKU_12601).